Here is a 329-residue protein sequence, read N- to C-terminus: Probable aryl-alcohol dehydrogenase AAD4 (329 aa).

Residue Tyr30 is the Proton donor of the active site. Residue His105 coordinates substrate. An NADP(+)-binding site is contributed by 190–200 (DVMGGGRFQSK).

The protein belongs to the aldo/keto reductase family. Aldo/keto reductase 2 subfamily.

This chain is Probable aryl-alcohol dehydrogenase AAD4 (AAD4), found in Saccharomyces cerevisiae (strain ATCC 204508 / S288c) (Baker's yeast).